A 1466-amino-acid polypeptide reads, in one-letter code: Helicase ARIP4 (1466 aa).

Disordered stretches follow at residues 1-137 and 185-235; these read MSDE…ERRK and DSSS…THVN. Residues 11–49 are compositionally biased toward acidic residues; it reads PDLDPDVELEDEEEEEEEEEVAVEEHDRDDEEGLLDDTS. The segment covering 72 to 82 has biased composition (low complexity); that stretch reads TSTTSSQSEPS. Residues 99–114 show a composition bias toward basic residues; it reads KKRAQKPSHMRRNIRK. Residues lysine 114 and lysine 126 each participate in a glycyl lysine isopeptide (Lys-Gly) (interchain with G-Cter in SUMO2) cross-link. A compositionally biased stretch (basic and acidic residues) spans 191–200; sequence EDEKSSRDEV. Residue lysine 271 forms a Glycyl lysine isopeptide (Lys-Gly) (interchain with G-Cter in SUMO2) linkage. One can recognise a Helicase ATP-binding domain in the interval 291–511; it reads RFKTSSGFGC…WCMVDFVRPD (221 aa). An ATP-binding site is contributed by 304–311; sequence HSMGLGKT. Residues 462-465 carry the DEAH box motif; the sequence is DEGH. The LXXLL motif 1 signature appears at 550-554; that stretch reads LHSLL. A disordered region spans residues 649 to 670; it reads SAGTSARCPPHGTKVKGEDSAL. Glycyl lysine isopeptide (Lys-Gly) (interchain with G-Cter in SUMO2) cross-links involve residues lysine 664, lysine 681, lysine 758, lysine 900, lysine 1013, and lysine 1017. One can recognise a Helicase C-terminal domain in the interval 727-895; it reads HLIEESVKLG…RVVDDLNPML (169 aa). Disordered regions lie at residues 1026 to 1045 and 1120 to 1170; these read QSTP…GVSS and ATGK…VSPD. Polar residues predominate over residues 1135 to 1154; sequence SGSQGPSLASTSNGRHSASS. Residues serine 1168 and serine 1171 each carry the phosphoserine modification. 2 disordered regions span residues 1184–1212 and 1259–1281; these read VAAA…MDNS and TPSV…APVQ. The residue at position 1259 (threonine 1259) is a Phosphothreonine. The LXXLL motif 2 signature appears at 1328–1332; it reads LSNLL. Positions 1444-1466 are disordered; that stretch reads AEVGFSSNDDEDKDDDVIEVTGK. Acidic residues predominate over residues 1451–1466; sequence NDDEDKDDDVIEVTGK.

This sequence belongs to the SNF2/RAD54 helicase family. In terms of assembly, interacts with AR via its N-terminus. Interacts with DYRK1A. Binds DNA and mononucleosomes, but does not seem to form large multiprotein complexes. Post-translationally, sumoylated. As to expression, expressed at relatively low level, with highest expression in testis, liver and kidney. In brain, it is expressed in hippocampal and cerebellar neurons. In testis, it is present at high level in Sertoli cell nuclei. Also present in Leydig cell (at protein level).

It localises to the nucleus. It catalyses the reaction ATP + H2O = ADP + phosphate + H(+). Its activity is regulated as follows. Enzyme activity is enhanced by dsDNA (double-stranded DNA) and ssDNA (single-stranded DNA). Its function is as follows. DNA helicase that modulates androgen receptor (AR)-dependent transactivation in a promoter-dependent manner. Not able to remodel mononucleosomes in vitro. Acts as an AR-coregulator in Sertoli cells. The chain is Helicase ARIP4 (Rad54l2) from Mus musculus (Mouse).